The primary structure comprises 264 residues: Thymidylate synthase (264 aa).

A dUMP-binding site is contributed by R21. A (6R)-5,10-methylene-5,6,7,8-tetrahydrofolate-binding site is contributed by H51. Residue 126–127 (RR) coordinates dUMP. Residue C146 is the Nucleophile of the active site. DUMP contacts are provided by residues 166 to 169 (RSCD), N177, and 207 to 209 (HLY). D169 serves as a coordination point for (6R)-5,10-methylene-5,6,7,8-tetrahydrofolate. A263 contacts (6R)-5,10-methylene-5,6,7,8-tetrahydrofolate.

This sequence belongs to the thymidylate synthase family. Bacterial-type ThyA subfamily. In terms of assembly, homodimer.

It localises to the cytoplasm. The enzyme catalyses dUMP + (6R)-5,10-methylene-5,6,7,8-tetrahydrofolate = 7,8-dihydrofolate + dTMP. It participates in pyrimidine metabolism; dTTP biosynthesis. In terms of biological role, catalyzes the reductive methylation of 2'-deoxyuridine-5'-monophosphate (dUMP) to 2'-deoxythymidine-5'-monophosphate (dTMP) while utilizing 5,10-methylenetetrahydrofolate (mTHF) as the methyl donor and reductant in the reaction, yielding dihydrofolate (DHF) as a by-product. This enzymatic reaction provides an intracellular de novo source of dTMP, an essential precursor for DNA biosynthesis. The polypeptide is Thymidylate synthase (Hamiltonella defensa subsp. Acyrthosiphon pisum (strain 5AT)).